We begin with the raw amino-acid sequence, 715 residues long: Macrolide export ATP-binding/permease protein MacB (715 aa).

The 242-residue stretch at 4–245 folds into the ABC transporter domain; the sequence is IELQDIRKTY…VSKAAPAQSK (242 aa). Residue 40–47 participates in ATP binding; the sequence is GTSGSGKT. The segment at 229–251 is disordered; sequence AVGDMPQVSKAAPAQSKPVHSAM. 4 helical membrane passes run 277–297, 592–612, 639–659, and 681–701; these read AALT…MMEI, LLLA…MNIM, QFLF…ILVG, and ILAA…YPAW.

It belongs to the ABC transporter superfamily. Macrolide exporter (TC 3.A.1.122) family. Homodimer.

It localises to the cell inner membrane. In terms of biological role, non-canonical ABC transporter that contains transmembrane domains (TMD), which form a pore in the inner membrane, and an ATP-binding domain (NBD), which is responsible for energy generation. Confers resistance against macrolides. This Syntrophobacter fumaroxidans (strain DSM 10017 / MPOB) protein is Macrolide export ATP-binding/permease protein MacB.